Here is a 585-residue protein sequence, read N- to C-terminus: Suppressor of mec-8 and unc-52 protein homolog 2 (585 aa).

Over residues 1-14 the composition is skewed to basic residues; the sequence is MKPSKSHHKEKTAR. Disordered stretches follow at residues 1–52 and 219–324; these read MKPS…SSFH and KKKK…PRDK. The segment covering 15 to 39 has biased composition (basic and acidic residues); it reads RREEKLEESDNPKYRDRAKERRENQ. R-[ED] repeat units lie at residues 16-17, 29-30, 36-37, and 258-259; these read RE and RD. A compositionally biased stretch (basic and acidic residues) spans 276-288; sequence LSTKQEEPPVART. R-[ED] repeat units lie at residues 322-323, 436-437, 445-446, 450-451, 540-541, and 542-543; these read RD and RE. The disordered stretch occupies residues 523–585; sequence FQFGVKMQDG…EAQTPKRSKH (63 aa). Residues 530–548 show a composition bias toward basic and acidic residues; sequence QDGRKTRKQNRDRDQKLNN. Thr-579 carries the phosphothreonine modification.

Belongs to the RED family. In terms of assembly, component of the spliceosome. Interacts with SMU1. Highly expressed in seedlings at 7 days after germination, young flowers before anthesis and developing siliques. Expressed at lower levels in roots, expanding leaves, open flowers, dry seeds and inflorescences. Not detected in senescing leaves.

It localises to the nucleus. In terms of biological role, auxiliary spliceosomal protein involved in splicing of specific pre-mRNAs that affect multiple aspects of development. The sequence is that of Suppressor of mec-8 and unc-52 protein homolog 2 (SMU2) from Arabidopsis thaliana (Mouse-ear cress).